Here is a 670-residue protein sequence, read N- to C-terminus: DNA ligase (670 aa).

NAD(+) is bound by residues 33–37 (DVEYD), 82–83 (SL), and E114. The N6-AMP-lysine intermediate role is filled by K116. 4 residues coordinate NAD(+): R137, E174, K291, and K315. Zn(2+)-binding residues include C409, C412, C427, and C433. The BRCT domain maps to 593–670 (DQELPLEGKV…TEEDLIALIS (78 aa)).

Belongs to the NAD-dependent DNA ligase family. LigA subfamily. It depends on Mg(2+) as a cofactor. Mn(2+) serves as cofactor.

It carries out the reaction NAD(+) + (deoxyribonucleotide)n-3'-hydroxyl + 5'-phospho-(deoxyribonucleotide)m = (deoxyribonucleotide)n+m + AMP + beta-nicotinamide D-nucleotide.. DNA ligase that catalyzes the formation of phosphodiester linkages between 5'-phosphoryl and 3'-hydroxyl groups in double-stranded DNA using NAD as a coenzyme and as the energy source for the reaction. It is essential for DNA replication and repair of damaged DNA. This chain is DNA ligase, found in Vibrio atlanticus (strain LGP32) (Vibrio splendidus (strain Mel32)).